The sequence spans 385 residues: Ethanolamine kinase 2 (385 aa).

The protein belongs to the choline/ethanolamine kinase family.

It carries out the reaction ethanolamine + ATP = phosphoethanolamine + ADP + H(+). It participates in phospholipid metabolism; phosphatidylethanolamine biosynthesis; phosphatidylethanolamine from ethanolamine: step 1/3. Functionally, highly specific for ethanolamine phosphorylation. Does not have choline kinase activity. The polypeptide is Ethanolamine kinase 2 (Etnk2) (Rattus norvegicus (Rat)).